A 223-amino-acid chain; its full sequence is ATP-dependent dethiobiotin synthetase BioD (223 aa).

Position 12–17 (12–17) interacts with ATP; that stretch reads EIGKTH. Thr-16 provides a ligand contact to Mg(2+). Residue Lys-37 is part of the active site. Position 41 (Ser-41) interacts with substrate. Residues Asp-52 and 118–121 contribute to the ATP site; that span reads EGVG. Asp-52 and Glu-118 together coordinate Mg(2+).

Belongs to the dethiobiotin synthetase family. In terms of assembly, homodimer. It depends on Mg(2+) as a cofactor.

The protein resides in the cytoplasm. The catalysed reaction is (7R,8S)-7,8-diammoniononanoate + CO2 + ATP = (4R,5S)-dethiobiotin + ADP + phosphate + 3 H(+). Its pathway is cofactor biosynthesis; biotin biosynthesis; biotin from 7,8-diaminononanoate: step 1/2. Its function is as follows. Catalyzes a mechanistically unusual reaction, the ATP-dependent insertion of CO2 between the N7 and N8 nitrogen atoms of 7,8-diaminopelargonic acid (DAPA, also called 7,8-diammoniononanoate) to form a ureido ring. The chain is ATP-dependent dethiobiotin synthetase BioD from Acidiphilium cryptum (strain JF-5).